Consider the following 347-residue polypeptide: Methionine import ATP-binding protein MetN (347 aa).

The region spanning 2 to 241 (IKLEGVSKTY…PATRLGRDFL (240 aa)) is the ABC transporter domain. ATP is bound at residue 38–45 (GLSGAGKS).

It belongs to the ABC transporter superfamily. Methionine importer (TC 3.A.1.24) family. The complex is composed of two ATP-binding proteins (MetN), two transmembrane proteins (MetI) and a solute-binding protein (MetQ).

The protein localises to the cell inner membrane. The enzyme catalyses L-methionine(out) + ATP + H2O = L-methionine(in) + ADP + phosphate + H(+). The catalysed reaction is D-methionine(out) + ATP + H2O = D-methionine(in) + ADP + phosphate + H(+). Part of the ABC transporter complex MetNIQ involved in methionine import. Responsible for energy coupling to the transport system. This chain is Methionine import ATP-binding protein MetN, found in Chromohalobacter salexigens (strain ATCC BAA-138 / DSM 3043 / CIP 106854 / NCIMB 13768 / 1H11).